The primary structure comprises 182 residues: Ribulose bisphosphate carboxylase small subunit, chloroplastic 6 (182 aa).

The transit peptide at 1–41 (MAATMMSKTIISSKQCSKPIAPPKVSINKGFVNTSAAIKNR) directs the protein to the chloroplast.

This sequence belongs to the RuBisCO small chain family. In terms of assembly, heterohexadecamer of 8 large and 8 small subunits.

It is found in the plastid. The protein resides in the chloroplast. In terms of biological role, ruBisCO catalyzes two reactions: the carboxylation of D-ribulose 1,5-bisphosphate, the primary event in carbon dioxide fixation, as well as the oxidative fragmentation of the pentose substrate. Both reactions occur simultaneously and in competition at the same active site. Although the small subunit is not catalytic it is essential for maximal activity. In Acetabularia peniculus (Green alga), this protein is Ribulose bisphosphate carboxylase small subunit, chloroplastic 6.